Reading from the N-terminus, the 61-residue chain is Large ribosomal subunit protein uL30 (61 aa).

The protein belongs to the universal ribosomal protein uL30 family. In terms of assembly, part of the 50S ribosomal subunit.

This Clostridioides difficile (strain 630) (Peptoclostridium difficile) protein is Large ribosomal subunit protein uL30.